Here is a 233-residue protein sequence, read N- to C-terminus: 5-demethoxyubiquinone hydroxylase, mitochondrial (233 aa).

Residues 1 to 15 (MLSRVSVFKPASRGF) constitute a mitochondrion transit peptide. Phosphoserine is present on residues S20 and S28. Position 32 is a phosphothreonine (T32). Residues E63, E95, H98, E147, E194, and H197 each contribute to the Fe cation site.

It belongs to the COQ7 family. Component of a multi-subunit COQ enzyme complex, composed of at least COQ3, COQ4, COQ5, COQ6, COQ7 and COQ9. The cofactor is Fe cation. In terms of processing, phosphorylated. Dephosphorylated by PTC7; dephosphorylation is essential for enzyme activation.

Its subcellular location is the mitochondrion inner membrane. The enzyme catalyses a 5-methoxy-2-methyl-3-(all-trans-polyprenyl)benzene-1,4-diol + AH2 + O2 = a 3-demethylubiquinol + A + H2O. It carries out the reaction a 5-methoxy-2-methyl-3-(all-trans-polyprenyl)benzoquinone + NADH + O2 = a 3-demethylubiquinone + NAD(+) + H2O. It participates in cofactor biosynthesis; ubiquinone biosynthesis. Its activity is regulated as follows. Dephosphorylation by PTC7 leads to activation. Catalyzes the hydroxylation of 2-hexaprenyl-3-methyl-6-methoxy-1,4-benzoquinol (DMQH2) during ubiquinone biosynthesis. Also catalyzes the hydroxylation of the 5-methoxy-2-methyl-3-(all-trans-polyprenyl)benzoquinone at the C6 position and participates in the biosynthesis of ubiquinone. Also has a structural role in the COQ enzyme complex, stabilizing COQ3 and COQ4 polypeptides. This Saccharomyces cerevisiae (strain ATCC 204508 / S288c) (Baker's yeast) protein is 5-demethoxyubiquinone hydroxylase, mitochondrial.